Consider the following 751-residue polypeptide: Centrosomal protein of 68 kDa (751 aa).

2 stretches are compositionally biased toward basic and acidic residues: residues 1 to 17 (MALG…EDTK) and 86 to 96 (ASREPVAERSE). The disordered stretch occupies residues 1 to 253 (MALGEEKAEA…PQPVFSGGDA (253 aa)). Composition is skewed to polar residues over residues 131–144 (LPQT…TTIC) and 163–175 (APSS…SQWK). Over residues 176-200 (SMPSPGSAAPQPSSCSVSASSTGSS) the composition is skewed to low complexity. At Ser326 the chain carries Phosphoserine. The segment covering 339-348 (STLKSPTNVF) has biased composition (polar residues). Disordered stretches follow at residues 339–474 (STLK…ESDD), 511–545 (SPLE…SGDP), and 590–611 (RLDR…KGGE). 2 stretches are compositionally biased toward basic and acidic residues: residues 399-416 (GSRD…RGAK) and 433-450 (RTRD…EKRT). Polar residues predominate over residues 451 to 461 (SQSARRPTCTE). Residues Ser466 and Ser472 each carry the phosphoserine modification. A compositionally biased stretch (low complexity) spans 520–537 (GPASLPSSSSQSQLPPGA).

In terms of assembly, interacts with CNTLN; the interaction recruits CEP68 to the centrosome. Interacts with the SCF(FBXW11) complex which contains SKP1, CUL1 and FBXW11; the interaction is probably mediated by FBXW11 and the complex also contains CDK5RAP2 and PCNT. Also interacts with F-box protein BTRC. Interacts with serine/threonine-protein kinase PLK1; the interaction leads to phosphorylation of CEP68 and its subsequent degradation. Interacts with NEK2; the interaction leads to phosphorylation of CEP68. Post-translationally, phosphorylation by PLK1 is required for binding to BTRC in prometaphase. Phosphorylated directly or indirectly by NEK2. NEK2-mediated phosphorylation promotes CEP68 dissociation from the centrosome and its degradation at the onset of mitosis. In terms of processing, ubiquitinated and targeted for proteasomal degradation in early mitosis by the SCF(BTRC) and/or SCF(FBXW11) E3 ubiquitin-protein ligase complexes. Degradation is complete by prometaphase and is required for removal of CDK5RAP2 from the peripheral pericentriolar material and subsequent centriole separation.

It localises to the cytoplasm. The protein resides in the cytoskeleton. The protein localises to the microtubule organizing center. It is found in the centrosome. Functionally, involved in maintenance of centrosome cohesion, probably as part of a linker structure which prevents centrosome splitting. Required for localization of CDK5RAP2 to the centrosome during interphase. Contributes to CROCC/rootletin filament formation. This chain is Centrosomal protein of 68 kDa (CEP68), found in Pongo abelii (Sumatran orangutan).